Reading from the N-terminus, the 870-residue chain is Phenylalanine--tRNA ligase beta subunit (870 aa).

One can recognise a tRNA-binding domain in the interval 39-148; that stretch reads AADLQKFEVA…EDAVVGEPFT (110 aa). The B5 domain occupies 427 to 551; the sequence is PAKKTLDFPA…RIYGYDKIES (125 aa). Residues 450-498 form the RPE1 insert domain; it reads LLHNEANKGEFVGNTEHSIAAYKEVREDASTGLTPKLPLEASYVKGLNI. 4 residues coordinate Mg(2+): aspartate 529, aspartate 535, glutamate 538, and glutamate 539. An FDX-ACB domain is found at 776-869; that stretch reads SDYQANFRDY…IEQKFQGTLR (94 aa).

It belongs to the phenylalanyl-tRNA synthetase beta subunit family. Type 1 subfamily. As to quaternary structure, tetramer of two alpha and two beta subunits. The cofactor is Mg(2+).

Its subcellular location is the cytoplasm. It catalyses the reaction tRNA(Phe) + L-phenylalanine + ATP = L-phenylalanyl-tRNA(Phe) + AMP + diphosphate + H(+). This chain is Phenylalanine--tRNA ligase beta subunit (pheT), found in Rickettsia bellii (strain RML369-C).